The sequence spans 329 residues: Replication factor C small subunit (329 aa).

An ATP-binding site is contributed by 51 to 58 (GPPGTGKT).

Belongs to the activator 1 small subunits family. RfcS subfamily. Heteromultimer composed of small subunits (RfcS) and large subunits (RfcL).

Its function is as follows. Part of the RFC clamp loader complex which loads the PCNA sliding clamp onto DNA. This Staphylothermus marinus (strain ATCC 43588 / DSM 3639 / JCM 9404 / F1) protein is Replication factor C small subunit.